Reading from the N-terminus, the 98-residue chain is Omega-hexatoxin-Hr2b (98 aa).

An N-terminal signal peptide occupies residues 1–22 (MKFSKLSLTLALILTQVLFVLC). The propeptide occupies 24–56 (KINEDFMKHGLESQALHDEIRKPIDSENPDTER). Intrachain disulfides connect Cys-60/Cys-74, Cys-67/Cys-80, and Cys-73/Cys-85. Leu-97 carries the leucine amide modification.

The protein belongs to the neurotoxin 15 family. 02 (omega-actx) subfamily. Expressed by the venom gland.

The protein localises to the secreted. In terms of biological role, potent inhibitor of insect, but not mammalian, voltage-gated calcium channels (Cav). This Atrax robustus (Sydney funnel-web spider) protein is Omega-hexatoxin-Hr2b.